A 464-amino-acid polypeptide reads, in one-letter code: tRNA(Ile2) 2-agmatinylcytidine synthetase TiaS (464 aa).

Belongs to the TiaS family.

It localises to the cytoplasm. It carries out the reaction cytidine(34) in tRNA(Ile2) + agmatine + ATP + H2O = 2-agmatinylcytidine(34) in tRNA(Ile2) + AMP + 2 phosphate + 2 H(+). In terms of biological role, ATP-dependent agmatine transferase that catalyzes the formation of 2-agmatinylcytidine (agm2C) at the wobble position (C34) of tRNA(Ile2), converting the codon specificity from AUG to AUA. This chain is tRNA(Ile2) 2-agmatinylcytidine synthetase TiaS, found in Ignisphaera aggregans (strain DSM 17230 / JCM 13409 / AQ1.S1).